The chain runs to 385 residues: Tuliposide A-converting enzyme 1, chloroplastic (385 aa).

A chloroplast-targeting transit peptide spans 1–77 (MSVASFFSSL…PSPSLSPTPT (77 aa)). Serine 235 serves as the catalytic Acyl-ester intermediate. Catalysis depends on charge relay system residues aspartate 327 and histidine 359.

Belongs to the AB hydrolase superfamily. In terms of assembly, homodimer. As to expression, expressed in roots, stems, leaves, petals, stamens and pistils, but not in bulb scales.

Its subcellular location is the plastid. It localises to the chloroplast. The enzyme catalyses 6-tuliposide A = tulipalin A + D-glucose. Inhibited by NaF, AgNO(3), HgCl(2), CuSO(4) and phenylmethylsulfonyl fluoride (PMSF). Functionally, lactone-forming carboxylesterases, specifically catalyzing intramolecular transesterification, but not hydrolysis. Involved in the biosynthesis of tulipalins, defensive chemicals that show antimicrobial activities against a broad range of strains of bacteria and fungi. Substrates are 6-tuliposide A &gt; 6-tuliposide B. This chain is Tuliposide A-converting enzyme 1, chloroplastic (TCEA1), found in Tulipa gesneriana (Garden tulip).